Reading from the N-terminus, the 334-residue chain is YbbR-like domain-containing protein BB_0009 (334 aa).

The helical transmembrane segment at 22–38 (AISILIAILMFVAFNFN) threads the bilayer. YbbR-like domains follow at residues 43-128 (ITTE…NVLL) and 138-220 (VKIE…VVNI).

Its subcellular location is the membrane. In Borreliella burgdorferi (strain ATCC 35210 / DSM 4680 / CIP 102532 / B31) (Borrelia burgdorferi), this protein is YbbR-like domain-containing protein BB_0009.